The primary structure comprises 82 residues: Small ribosomal subunit protein bS18 (82 aa).

Residues 1 to 20 form a disordered region; sequence MSETSSAPVRRPFHRRRKTC.

It belongs to the bacterial ribosomal protein bS18 family. In terms of assembly, part of the 30S ribosomal subunit. Forms a tight heterodimer with protein bS6.

In terms of biological role, binds as a heterodimer with protein bS6 to the central domain of the 16S rRNA, where it helps stabilize the platform of the 30S subunit. The chain is Small ribosomal subunit protein bS18 from Rhizobium johnstonii (strain DSM 114642 / LMG 32736 / 3841) (Rhizobium leguminosarum bv. viciae).